A 167-amino-acid polypeptide reads, in one-letter code: Peroxiredoxin Pen c 3 (167 aa).

Residues 3–167 enclose the Thioredoxin domain; sequence LKAGDSFPEG…SRADHVLKQL (165 aa). The active-site Cysteine sulfenic acid (-SOH) intermediate is cysteine 60.

It belongs to the peroxiredoxin family. Prx5 subfamily. Homodimer; disulfide-linked, upon oxidation.

The enzyme catalyses a hydroperoxide + [thioredoxin]-dithiol = an alcohol + [thioredoxin]-disulfide + H2O. Functionally, thiol-specific peroxidase that catalyzes the reduction of hydrogen peroxide and organic hydroperoxides to water and alcohols, respectively. Plays a role in cell protection against oxidative stress by detoxifying peroxides and as sensor of hydrogen peroxide-mediated signaling events. The polypeptide is Peroxiredoxin Pen c 3 (Penicillium citrinum).